Here is a 418-residue protein sequence, read N- to C-terminus: MKLESQFLSFLYSRGYCSQCTNISMLDQLMSQQCVHAYIGFDCTAKSLHVGSLIQVMILRHLQKFGHKPIILLGDGTTKIGDPSGKDKSRAMLSASEIEENALGIYEVLKKFIVFGDGPHDALLVRNAEWLNGLNYIEFLRDIGKHFSVNNMLTFDSVRLRLEREQNLSFLEFNYMLLQSYDFVELNRRYNCLLQIGGSDQWGNIVSGVELGRKLRLPELFGLTTNLLLTSSGEKMGKTAQGAVWLDGNMYSPVDYWQYFRNVKDEDVGRFLRLFTELSLNEIRNLELLQGHEINESKKILATEATRICHGEEIAQSVANDALKVFECNDDSGLSVFYVKKYDVELGLPIIKLLQMCEMEKSSSSARRLINDKGCKINDVVVLDMNYKLSLKDFYNTSYVKLSCGKKRHLKVMLESDF.

Residue tyrosine 38 participates in L-tyrosine binding. A 'HIGH' region motif is present at residues 43–52 (CTAKSLHVGS). Positions 175 and 179 each coordinate L-tyrosine. A 'KMSKS' region motif is present at residues 235 to 239 (KMGKT). Lysine 238 contacts ATP. The S4 RNA-binding domain maps to 348-413 (LPIIKLLQMC…CGKKRHLKVM (66 aa)).

Belongs to the class-I aminoacyl-tRNA synthetase family. TyrS type 1 subfamily. As to quaternary structure, homodimer.

It localises to the cytoplasm. The enzyme catalyses tRNA(Tyr) + L-tyrosine + ATP = L-tyrosyl-tRNA(Tyr) + AMP + diphosphate + H(+). Its function is as follows. Catalyzes the attachment of tyrosine to tRNA(Tyr) in a two-step reaction: tyrosine is first activated by ATP to form Tyr-AMP and then transferred to the acceptor end of tRNA(Tyr). In Ehrlichia chaffeensis (strain ATCC CRL-10679 / Arkansas), this protein is Tyrosine--tRNA ligase.